A 132-amino-acid polypeptide reads, in one-letter code: Sec-independent protein translocase protein TatB (132 aa).

A helical transmembrane segment spans residues 2-22; sequence FDGIGFMELLLIGILGLVVLG. A disordered region spans residues 68–132; the sequence is ENQGLKDLSP…VSANPDKSNR (65 aa). Low complexity predominate over residues 102–122; that stretch reads TPSASSSAPSESTPSEAPTAE.

The protein belongs to the TatB family. In terms of assembly, the Tat system comprises two distinct complexes: a TatABC complex, containing multiple copies of TatA, TatB and TatC subunits, and a separate TatA complex, containing only TatA subunits. Substrates initially bind to the TatABC complex, which probably triggers association of the separate TatA complex to form the active translocon.

The protein resides in the cell inner membrane. In terms of biological role, part of the twin-arginine translocation (Tat) system that transports large folded proteins containing a characteristic twin-arginine motif in their signal peptide across membranes. Together with TatC, TatB is part of a receptor directly interacting with Tat signal peptides. TatB may form an oligomeric binding site that transiently accommodates folded Tat precursor proteins before their translocation. The sequence is that of Sec-independent protein translocase protein TatB from Shewanella woodyi (strain ATCC 51908 / MS32).